The sequence spans 908 residues: 3-phosphoinositide-dependent protein kinase B (908 aa).

Low complexity-rich tracts occupy residues 53-170 (NNNF…SSSL), 179-189 (YSDSSDSIDSY), and 200-216 (QQQQHLQQQQDQPQPLH). The segment at 53–267 (NNNFNNNNNN…PNSSIPHKKS (215 aa)) is disordered. The segment covering 250–262 (KTSSFGLQPNSSI) has biased composition (polar residues). The region spanning 271 to 527 (FDFIRTIGKG…ISEIKNHEFF (257 aa)) is the Protein kinase domain. ATP is bound by residues 281–283 (AYG) and K300. The interval 302 to 346 (LNKKLIIKEKKAKYVNTEKTILDSLDNPNIVKLFYTFQDENNLYF) is PIF-pocket. ATP-binding positions include 349-351 (EYC) and D355. The Proton acceptor role is filled by D394. 2 residues coordinate ATP: E398 and D412. 2 disordered regions span residues 538-560 (SQTPPPIEQMVPQSPFPSPNSSL) and 606-755 (ISNN…KNLQ). Residues 607–684 (SNNNNNNNNT…PAYSSTPSST (78 aa)) show a composition bias toward low complexity. Polar residues predominate over residues 696–709 (SSCSSNNLLGKSSN). Over residues 710–741 (QQYQPFQFHQQQQQQQQQQQRERSSTTTPSPT) the composition is skewed to low complexity. In terms of domain architecture, PH spans 764–902 (SSFSTSSPMS…KLWVDLINEL (139 aa)).

It belongs to the protein kinase superfamily. AGC Ser/Thr protein kinase family. PDPK1 subfamily.

It carries out the reaction L-seryl-[protein] + ATP = O-phospho-L-seryl-[protein] + ADP + H(+). It catalyses the reaction L-threonyl-[protein] + ATP = O-phospho-L-threonyl-[protein] + ADP + H(+). The polypeptide is 3-phosphoinositide-dependent protein kinase B (pdkB) (Dictyostelium discoideum (Social amoeba)).